A 502-amino-acid chain; its full sequence is ATP synthase subunit alpha (502 aa).

Positions 115–138 are disordered; it reads VDGLGPIETTETRPIESPAPGVMD. An ATP-binding site is contributed by 169-176; sequence GDRQTGKT.

The protein belongs to the ATPase alpha/beta chains family. F-type ATPases have 2 components, CF(1) - the catalytic core - and CF(0) - the membrane proton channel. CF(1) has five subunits: alpha(3), beta(3), gamma(1), delta(1), epsilon(1). CF(0) has three main subunits: a(1), b(2) and c(9-12). The alpha and beta chains form an alternating ring which encloses part of the gamma chain. CF(1) is attached to CF(0) by a central stalk formed by the gamma and epsilon chains, while a peripheral stalk is formed by the delta and b chains.

The protein resides in the cell membrane. It carries out the reaction ATP + H2O + 4 H(+)(in) = ADP + phosphate + 5 H(+)(out). Functionally, produces ATP from ADP in the presence of a proton gradient across the membrane. The alpha chain is a regulatory subunit. The polypeptide is ATP synthase subunit alpha (Geobacillus sp. (strain WCH70)).